The following is a 340-amino-acid chain: Very-long-chain 3-oxoacyl-CoA reductase (340 aa).

The helical transmembrane segment at 23–43 threads the bilayer; the sequence is LQYTFAALGALYVLRGALSFV. Residues valine 68, arginine 109, aspartate 123, aspartate 131, asparagine 150, lysine 185, tyrosine 217, lysine 221, valine 250, and threonine 252 each contribute to the NADP(+) site. The Proton donor role is filled by tyrosine 217. Residue lysine 221 is the Lowers pKa of active site Tyr of the active site.

Belongs to the short-chain dehydrogenases/reductases (SDR) family.

The protein resides in the endoplasmic reticulum membrane. The catalysed reaction is a very-long-chain (3R)-3-hydroxyacyl-CoA + NADP(+) = a very-long-chain 3-oxoacyl-CoA + NADPH + H(+). The protein operates within lipid metabolism; fatty acid biosynthesis. Component of the microsomal membrane bound fatty acid elongation system, which produces the 26-carbon very long-chain fatty acids (VLCFA) from palmitate. Catalyzes the reduction of the 3-ketoacyl-CoA intermediate that is formed in each cycle of fatty acid elongation. VLCFAs serve as precursors for ceramide and sphingolipids. This Podospora anserina (strain S / ATCC MYA-4624 / DSM 980 / FGSC 10383) (Pleurage anserina) protein is Very-long-chain 3-oxoacyl-CoA reductase.